A 69-amino-acid polypeptide reads, in one-letter code: Small, acid-soluble spore protein A (69 aa).

This sequence belongs to the alpha/beta-type SASP family.

In terms of biological role, SASP are bound to spore DNA. They are double-stranded DNA-binding proteins that cause DNA to change to an a-like conformation. They protect the DNA backbone from chemical and enzymatic cleavage and are thus involved in dormant spore's high resistance to UV light. This is Small, acid-soluble spore protein A (sspA) from Bacillus subtilis (strain 168).